A 227-amino-acid chain; its full sequence is MMLQIPDVLTSDEAAYCRGVLDAAPWVDGNVTSGFQAAMAKNNQQLPQDGAAAREIGAIIVQALNANPLFVSAALPRTILSPLFNRYGVGMGFGDHVDNSVRRDPVTGQTLRTDLSITVFLSDPDDYDGGELVVEDAYGSHLVKLAAGAAILYPASSLHHVTEVTRGVRTASFFWIQSLVRDDAKRGLLLDMDVAIQRLSGAVGTTDPSVLSLTGTYHNLLRMWAEV.

The Fe2OG dioxygenase domain occupies 78 to 178; the sequence is TILSPLFNRY…RTASFFWIQS (101 aa). Positions 96, 98, and 159 each coordinate Fe cation. Position 169 (Arg169) interacts with 2-oxoglutarate.

Fe(2+) is required as a cofactor. Requires L-ascorbate as cofactor.

This is PKHD-type hydroxylase Caul_0045 from Caulobacter sp. (strain K31).